A 56-amino-acid chain; its full sequence is Large ribosomal subunit protein bL32 (56 aa).

Residues 1–37 (MAVQQNKKSRSRRDMRRSHDALTTAAISVDKASGEKH) form a disordered region. The segment covering 7–16 (KKSRSRRDMR) has biased composition (basic residues).

This sequence belongs to the bacterial ribosomal protein bL32 family.

The protein is Large ribosomal subunit protein bL32 (rpmF) of Pasteurella multocida (strain Pm70).